The sequence spans 304 residues: Glutaminase (304 aa).

Substrate is bound by residues S63, N113, E157, N164, Y188, Y240, and V258.

The protein belongs to the glutaminase family. Homotetramer.

The catalysed reaction is L-glutamine + H2O = L-glutamate + NH4(+). This Chromobacterium violaceum (strain ATCC 12472 / DSM 30191 / JCM 1249 / CCUG 213 / NBRC 12614 / NCIMB 9131 / NCTC 9757 / MK) protein is Glutaminase.